The chain runs to 318 residues: Sucrose operon repressor (318 aa).

Positions 1–56 (MIKLEDVANKAGVSVTTVSRVINRKGYLSDATISKVEKAMQDLHYIPNAAARSLQG) constitute an HTH lacI-type domain. Residues 4–23 (LEDVANKAGVSVTTVSRVIN) constitute a DNA-binding region (H-T-H motif).

Its function is as follows. This protein may control the expression of the genes that are involved in the transport and catabolism of sucrose. In Lactococcus lactis subsp. lactis (Streptococcus lactis), this protein is Sucrose operon repressor (sacR).